The following is a 420-amino-acid chain: Calsequestrin-1 (420 aa).

An N-terminal signal peptide occupies residues 1–22 (MKGPWLVLAALCLSLANLGPRG). Asn338 is a glycosylation site (N-linked (GlcNAc...) asparagine). The disordered stretch occupies residues 369-420 (LEGEVNTEDDDDDDDDDDDDDDDDDDDDDDDDDDDDDDDDDDDDDDDDDDDD).

Belongs to the calsequestrin family. Monomer; increases in response to a depletion of intracellular calcium. Homodimer. Homotetramer and homopolymer. Can form linear homooligomers. Ca(2+) ions promote oligomerization. As to expression, detected in skeletal muscle (at protein level). Detected in skeletal muscle.

It localises to the endoplasmic reticulum. The protein localises to the sarcoplasmic reticulum. Its subcellular location is the sarcoplasmic reticulum lumen. The protein resides in the sarcoplasmic reticulum membrane. It is found in the mitochondrion matrix. Functionally, calsequestrin is a high-capacity, moderate affinity, calcium-binding protein and thus acts as an internal calcium store in muscle. Calcium ions are bound by clusters of acidic residues at the protein surface, often at the interface between subunits. Can bind around 80 Ca(2+) ions. Regulates the release of lumenal Ca(2+) via the calcium release channel RYR1; this plays an important role in triggering muscle contraction. Negatively regulates store-operated Ca(2+) entry (SOCE) activity. This chain is Calsequestrin-1, found in Pelophylax lessonae (Pool frog).